Reading from the N-terminus, the 364-residue chain is MLYFLAETIFGFICQYVPIGFWNGYSPAPTDRYRRLDLKSSQGFRAEPNLAPLPTTKPRRERYYGPNQIIRAPLDYLLSIPGKDIRGKLINAFNEWLQLPDDKLAIVKEVINLLHTASLLIDDIQDGSRLRRGRPVAHEVFGVAQTINAANYAYFLQQERLSEIGDPRAFHIFTNALLDLHRGQGMDLYWREAVVCPTEEEYIRMVIYKTGGLFRLALELMQVQSNSTTDFSELVELLGIIFQIRDDYMNLQSGLYAEKKGSMEDLTEGKFSYPVIHSIHAAPENSMLVDILKQRTEDNVVKVRAVHYMESTGSFQYCRENLARLTKQARHHVKELEVSLGPNRGIHAILDLLHVQQPNEKPLV.

3 residues coordinate isopentenyl diphosphate: K83, R86, and H115. Mg(2+) is bound by residues D122 and D126. R131 contributes to the dimethylallyl diphosphate binding site. Position 132 (R132) interacts with isopentenyl diphosphate. K209, T210, and Q243 together coordinate dimethylallyl diphosphate. A Mg(2+)-binding site is contributed by D246. Positions 250, 260, and 270 each coordinate dimethylallyl diphosphate.

The protein belongs to the FPP/GGPP synthase family. Mg(2+) is required as a cofactor.

It catalyses the reaction isopentenyl diphosphate + dimethylallyl diphosphate = (2E)-geranyl diphosphate + diphosphate. It carries out the reaction isopentenyl diphosphate + (2E)-geranyl diphosphate = (2E,6E)-farnesyl diphosphate + diphosphate. The catalysed reaction is isopentenyl diphosphate + (2E,6E)-farnesyl diphosphate = (2E,6E,10E)-geranylgeranyl diphosphate + diphosphate. The protein operates within secondary metabolite biosynthesis. Functionally, geranylgeranyl pyrophosphate synthase; part of the gene cluster that mediates the biosynthesis of the indole diterpenes janthitremanes such as shearinine K or shearinine A. The geranylgeranyl diphosphate (GGPP) synthase janG catalyzes the first step in janthitremane biosynthesis via conversion of farnesyl pyrophosphate and isopentyl pyrophosphate into geranylgeranyl pyrophosphate (GGPP). Condensation of indole-3-glycerol phosphate with GGPP by the prenyl transferase janC then forms 3-geranylgeranylindole (3-GGI). Epoxidation by the FAD-dependent monooxygenase janM leads to a epoxidized-GGI that is substrate of the terpene cyclase janB for cyclization to yield paspaline. Paspaline is subsequently converted to 13-desoxypaspaline by the cytochrome P450 monooxygenase janP, via beta-PC-M6 in a series of alpha-face oxidations. The cytochrome P450 monooxygenase janQ is proposed to carry out sequential beta-face oxidation steps at C-7 and C-13 of 13-desoxypaspaline to form paspalicine and paspalinine respectively. The indole diterpene prenyltransferase janD may then convert paspalinine into shearinine K which is substrate of janO and/or additional enzymes for oxidation and cyclization to generate shearinine A. The polypeptide is Geranylgeranyl pyrophosphate synthase janG (Penicillium janthinellum (Penicillium vitale)).